The chain runs to 240 residues: Dihydromonapterin reductase (240 aa).

Residue Tyr152 is the Proton acceptor of the active site.

Belongs to the short-chain dehydrogenases/reductases (SDR) family. FolM subfamily.

The catalysed reaction is (6S)-5,6,7,8-tetrahydrofolate + NADP(+) = 7,8-dihydrofolate + NADPH + H(+). The enzyme catalyses 7,8-dihydromonapterin + NADPH + H(+) = 5,6,7,8-tetrahydromonapterin + NADP(+). In terms of biological role, catalyzes the reduction of dihydromonapterin to tetrahydromonapterin. Also has lower activity with dihydrofolate. This Escherichia coli O6:K15:H31 (strain 536 / UPEC) protein is Dihydromonapterin reductase (folM).